A 289-amino-acid chain; its full sequence is Diaminopimelate epimerase (289 aa).

Residues asparagine 17, glutamine 47, and asparagine 67 each coordinate substrate. Cysteine 76 serves as the catalytic Proton donor. Residues 77–78 (GN), asparagine 164, asparagine 198, and 216–217 (ER) each bind substrate. Cysteine 225 (proton acceptor) is an active-site residue. Residue 226-227 (GS) coordinates substrate.

Belongs to the diaminopimelate epimerase family. Homodimer.

The protein localises to the cytoplasm. It carries out the reaction (2S,6S)-2,6-diaminopimelate = meso-2,6-diaminopimelate. Its pathway is amino-acid biosynthesis; L-lysine biosynthesis via DAP pathway; DL-2,6-diaminopimelate from LL-2,6-diaminopimelate: step 1/1. Its function is as follows. Catalyzes the stereoinversion of LL-2,6-diaminopimelate (L,L-DAP) to meso-diaminopimelate (meso-DAP), a precursor of L-lysine and an essential component of the bacterial peptidoglycan. This Bradyrhizobium sp. (strain BTAi1 / ATCC BAA-1182) protein is Diaminopimelate epimerase.